Here is a 253-residue protein sequence, read N- to C-terminus: E3 ubiquitin-protein ligase MARCHF3 (253 aa).

The RING-CH-type zinc-finger motif lies at 63–123 (SPFNDRPMCR…ELCHFRFAVE (61 aa)). Zn(2+) contacts are provided by C71, C74, C87, C89, H97, C100, C113, and C116. A run of 2 helical transmembrane segments spans residues 145–165 (LFGDMVCFLFITPLATISGWL) and 182–202 (AVGLIALTVALFTIYLFWTLV). 2 positions are modified to phosphoserine: S237 and S243.

As to quaternary structure, interacts with MARCHF2 and STX6.

The protein localises to the cytoplasmic vesicle membrane. It localises to the early endosome membrane. The catalysed reaction is S-ubiquitinyl-[E2 ubiquitin-conjugating enzyme]-L-cysteine + [acceptor protein]-L-lysine = [E2 ubiquitin-conjugating enzyme]-L-cysteine + N(6)-ubiquitinyl-[acceptor protein]-L-lysine.. It functions in the pathway protein modification; protein ubiquitination. E3 ubiquitin-protein ligase which may be involved in endosomal trafficking. E3 ubiquitin ligases accept ubiquitin from an E2 ubiquitin-conjugating enzyme in the form of a thioester and then directly transfer the ubiquitin to targeted substrates. This chain is E3 ubiquitin-protein ligase MARCHF3, found in Homo sapiens (Human).